We begin with the raw amino-acid sequence, 514 residues long: Protein p59 (514 aa).

It localises to the virion. The chain is Protein p59 from Lettuce infectious yellows virus (isolate United States/92) (LIYV).